We begin with the raw amino-acid sequence, 714 residues long: MEMASAFTLNVRLDNIAIITIDVPDEKMNTLKAEFASQVRAIIKQLRENKELRGVVFISAKPDNFIAGADINMIGNCKTVQEAEALARQGQQLMAEIHALPIPVIAAIHGACLGGGLELALACHGRVCTDDPKTVLGLPEVQLGLLPGSGGTQRLPRLIGVSTTLEMILTGKQLRAKQALKLGLVDDVVPHSILLEVAVELAKKDRPSSRPLPVRERILAGPLGRALLFKMVGKKTEHKTQGNYPATERILEVVETGLAQGTSSGYDAEARAFGELAMTPQSQALRSIFFASTDVKKDPGSDAPPAPLNSVGILGGGLMGGGIAYVTACKAGLPVRIKDINPQGINHALKYSWDQLEGKVRRRHLKASERDKQLALISGTTDYRGFAHRDLIIEAVFENLELKQQMVAEVEQNCAAHTIFASNTSSLPIGDIAAHATRPEQVIGLHFFSPVEKMPLVEIIPHAGTSAQTIATTVKLAKKQGKTPIVVRDKAGFYVNRILAPYINEAIRMLTKGERVEHIDAALVKFGFPVGPIQLLDEVGIDTGTKIIPVLEAAYGERFSAPANVVSSILNDDRKGRKNGRGFYLYGQKGRKSKKQVDPAIYPLIGAQGQGRLSAPQVSERCVMLMLNEAVRCVDEQVIRSVRDGDIGAVFGIGFPPFLGGPFRYIDSLGAGEVVAIMQRLATQYGSRFTPCERLVEMGARGESFWKTTATDLQ.

Residues 1 to 190 (MEMASAFTLN…KLGLVDDVVP (190 aa)) are enoyl-CoA hydratase. Residues 306-714 (APLNSVGILG…FWKTTATDLQ (409 aa)) form a 3-hydroxyacyl-CoA dehydrogenase region.

The protein in the N-terminal section; belongs to the enoyl-CoA hydratase/isomerase family. It in the central section; belongs to the 3-hydroxyacyl-CoA dehydrogenase family. Heterotetramer of two alpha chains (FadJ) and two beta chains (FadI).

The protein localises to the cytoplasm. The enzyme catalyses a (3S)-3-hydroxyacyl-CoA = a (2E)-enoyl-CoA + H2O. It catalyses the reaction a 4-saturated-(3S)-3-hydroxyacyl-CoA = a (3E)-enoyl-CoA + H2O. It carries out the reaction a (3S)-3-hydroxyacyl-CoA + NAD(+) = a 3-oxoacyl-CoA + NADH + H(+). The catalysed reaction is (3S)-3-hydroxybutanoyl-CoA = (3R)-3-hydroxybutanoyl-CoA. The protein operates within lipid metabolism; fatty acid beta-oxidation. Its function is as follows. Catalyzes the formation of a hydroxyacyl-CoA by addition of water on enoyl-CoA. Also exhibits 3-hydroxyacyl-CoA epimerase and 3-hydroxyacyl-CoA dehydrogenase activities. This chain is Fatty acid oxidation complex subunit alpha, found in Shigella boydii serotype 4 (strain Sb227).